The primary structure comprises 489 residues: Kynureninase 2 (489 aa).

Residues 1-12 (MDASAAISQLRQ) show a composition bias toward polar residues. The tract at residues 1–25 (MDASAAISQLRQGQKPEWPQNANTS) is disordered. Pyridoxal 5'-phosphate contacts are provided by residues L149, T150, 177-180 (FPSD), D261, H264, and Y286. Position 287 is an N6-(pyridoxal phosphate)lysine (K287). W317 and N345 together coordinate pyridoxal 5'-phosphate.

Belongs to the kynureninase family. In terms of assembly, homodimer. Pyridoxal 5'-phosphate is required as a cofactor.

The protein resides in the cytoplasm. The catalysed reaction is L-kynurenine + H2O = anthranilate + L-alanine + H(+). It catalyses the reaction 3-hydroxy-L-kynurenine + H2O = 3-hydroxyanthranilate + L-alanine + H(+). The protein operates within amino-acid degradation; L-kynurenine degradation; L-alanine and anthranilate from L-kynurenine: step 1/1. It functions in the pathway cofactor biosynthesis; NAD(+) biosynthesis; quinolinate from L-kynurenine: step 2/3. In terms of biological role, catalyzes the cleavage of L-kynurenine (L-Kyn) and L-3-hydroxykynurenine (L-3OHKyn) into anthranilic acid (AA) and 3-hydroxyanthranilic acid (3-OHAA), respectively. The sequence is that of Kynureninase 2 from Phaeosphaeria nodorum (strain SN15 / ATCC MYA-4574 / FGSC 10173) (Glume blotch fungus).